Here is a 269-residue protein sequence, read N- to C-terminus: 4-hydroxy-tetrahydrodipicolinate reductase (269 aa).

Residues 11-16 (GASGRM) and Glu-37 contribute to the NAD(+) site. Arg-38 is an NADP(+) binding site. Residues 101–103 (GTT) and 125–128 (AGNM) contribute to the NAD(+) site. The active-site Proton donor/acceptor is His-158. His-159 provides a ligand contact to (S)-2,3,4,5-tetrahydrodipicolinate. Lys-162 serves as the catalytic Proton donor. 168-169 (GT) is a binding site for (S)-2,3,4,5-tetrahydrodipicolinate.

This sequence belongs to the DapB family.

Its subcellular location is the cytoplasm. The enzyme catalyses (S)-2,3,4,5-tetrahydrodipicolinate + NAD(+) + H2O = (2S,4S)-4-hydroxy-2,3,4,5-tetrahydrodipicolinate + NADH + H(+). It catalyses the reaction (S)-2,3,4,5-tetrahydrodipicolinate + NADP(+) + H2O = (2S,4S)-4-hydroxy-2,3,4,5-tetrahydrodipicolinate + NADPH + H(+). Its pathway is amino-acid biosynthesis; L-lysine biosynthesis via DAP pathway; (S)-tetrahydrodipicolinate from L-aspartate: step 4/4. Catalyzes the conversion of 4-hydroxy-tetrahydrodipicolinate (HTPA) to tetrahydrodipicolinate. This is 4-hydroxy-tetrahydrodipicolinate reductase from Ruegeria sp. (strain TM1040) (Silicibacter sp.).